The primary structure comprises 254 residues: Isoprenyl transferase (254 aa).

Residue Asp24 is part of the active site. Asp24 provides a ligand contact to Mg(2+). Residues 25–28 (GNGR), Trp29, Arg37, His41, and 69–71 (SSE) each bind substrate. Asn72 functions as the Proton acceptor in the catalytic mechanism. Substrate-binding positions include Trp73, Arg75, Arg192, and 198–200 (RIS). Glu211 lines the Mg(2+) pocket.

This sequence belongs to the UPP synthase family. Homodimer. The cofactor is Mg(2+).

Catalyzes the condensation of isopentenyl diphosphate (IPP) with allylic pyrophosphates generating different type of terpenoids. In Bordetella parapertussis (strain 12822 / ATCC BAA-587 / NCTC 13253), this protein is Isoprenyl transferase.